The primary structure comprises 300 residues: MTLAIPLELSLFDPTSADFLVPLISFSAYFSVKSFTMRPCPRLLTRKLNYPGHIPLSPAQNALLAVGSGVVGVLDVTRGDLIASLSESTAGIFLPALHEKMKMTPEGRQIMKDRPEITNKTIEKLKELKRGTLGREYVEWLGGGGLEPESRAPVQYIDSPLLAYTMLRYRQTHDLYHTLFSLPPTLPHELSLKVLEFSNMSLPVALLSSVFGPLRLKRKETWTRDWVPWALRTGREGRSLVTVYWEKRWEQGIGELRRELGVERNDADGVEARWGGYRKIREVERELRRKGEWVDEPEDW.

Positions 173, 174, 177, and 189 each coordinate Zn(2+).

Belongs to the COQ4 family. In terms of assembly, component of a multi-subunit COQ enzyme complex, composed of at least COQ3, COQ4, COQ5, COQ6, COQ7 and COQ9. It depends on Zn(2+) as a cofactor.

It localises to the mitochondrion inner membrane. The enzyme catalyses a 4-hydroxy-3-methoxy-5-(all-trans-polyprenyl)benzoate + H(+) = a 2-methoxy-6-(all-trans-polyprenyl)phenol + CO2. The protein operates within cofactor biosynthesis; ubiquinone biosynthesis. Its function is as follows. Lyase that catalyzes the C1-decarboxylation of 4-hydroxy-3-methoxy-5-(all-trans-polyprenyl)benzoic acid into 2-methoxy-6-(all-trans-polyprenyl)phenol during ubiquinone biosynthesis. In Cryptococcus neoformans var. neoformans serotype D (strain B-3501A) (Filobasidiella neoformans), this protein is Ubiquinone biosynthesis protein COQ4, mitochondrial.